We begin with the raw amino-acid sequence, 508 residues long: Probable cytosol aminopeptidase (508 aa).

The Mn(2+) site is built by Lys-274 and Asp-279. Lys-286 is an active-site residue. Residues Asp-297, Asp-356, and Glu-358 each contribute to the Mn(2+) site. The active site involves Arg-360.

It belongs to the peptidase M17 family. Mn(2+) serves as cofactor.

It is found in the cytoplasm. It carries out the reaction Release of an N-terminal amino acid, Xaa-|-Yaa-, in which Xaa is preferably Leu, but may be other amino acids including Pro although not Arg or Lys, and Yaa may be Pro. Amino acid amides and methyl esters are also readily hydrolyzed, but rates on arylamides are exceedingly low.. The catalysed reaction is Release of an N-terminal amino acid, preferentially leucine, but not glutamic or aspartic acids.. In terms of biological role, presumably involved in the processing and regular turnover of intracellular proteins. Catalyzes the removal of unsubstituted N-terminal amino acids from various peptides. In Paraburkholderia xenovorans (strain LB400), this protein is Probable cytosol aminopeptidase.